The following is a 178-amino-acid chain: MRHNKAGRRLGRTTSHRIAMFRNMVTSFLEHERITTTDAKAKELRSIAEKMITLGKRGDLHAQRQAASYIRDKKVVTKLFSTIAPRYKERDGGYTRIIKLGIRPGDNAPLSVIELVEEQVNKKEKKAKPAKAAIVATAPAVEQAAVLTSPADEPVVAEENAPQSAVKDAVDECEGKAD.

Residues 150-178 form a disordered region; it reads PADEPVVAEENAPQSAVKDAVDECEGKAD. Over residues 168–178 the composition is skewed to basic and acidic residues; that stretch reads DAVDECEGKAD.

Belongs to the bacterial ribosomal protein bL17 family. Part of the 50S ribosomal subunit. Contacts protein L32.

This chain is Large ribosomal subunit protein bL17, found in Geobacter metallireducens (strain ATCC 53774 / DSM 7210 / GS-15).